We begin with the raw amino-acid sequence, 485 residues long: Peroxisomal catalase (485 aa).

Active-site residues include His-53 and Asn-126. Tyr-336 serves as a coordination point for heme.

This sequence belongs to the catalase family. In terms of assembly, homotetramer. Heme is required as a cofactor.

The protein localises to the peroxisome matrix. The catalysed reaction is 2 H2O2 = O2 + 2 H2O. Catalyzes the degradation of hydrogen peroxide (H(2)O(2)) generated by peroxisomal oxidases to water and oxygen, thereby protecting cells from the toxic effects of hydrogen peroxide. The polypeptide is Peroxisomal catalase (CAT1) (Candida albicans (strain SC5314 / ATCC MYA-2876) (Yeast)).